We begin with the raw amino-acid sequence, 916 residues long: Protein translocase subunit SecA (916 aa).

Residues Q87, G105–T109, and D507 contribute to the ATP site. Zn(2+) is bound by residues C900, C902, C911, and H912.

Belongs to the SecA family. As to quaternary structure, monomer and homodimer. Part of the essential Sec protein translocation apparatus which comprises SecA, SecYEG and auxiliary proteins SecDF-YajC and YidC. The cofactor is Zn(2+).

It is found in the cell inner membrane. The protein localises to the cytoplasm. It carries out the reaction ATP + H2O + cellular proteinSide 1 = ADP + phosphate + cellular proteinSide 2.. Its function is as follows. Part of the Sec protein translocase complex. Interacts with the SecYEG preprotein conducting channel. Has a central role in coupling the hydrolysis of ATP to the transfer of proteins into and across the cell membrane, serving both as a receptor for the preprotein-SecB complex and as an ATP-driven molecular motor driving the stepwise translocation of polypeptide chains across the membrane. This Neisseria gonorrhoeae (strain ATCC 700825 / FA 1090) protein is Protein translocase subunit SecA.